Here is a 237-residue protein sequence, read N- to C-terminus: Uridylate kinase (237 aa).

11 to 14 is an ATP binding site; it reads KLSG. Gly-53 contributes to the UMP binding site. Positions 54 and 58 each coordinate ATP. UMP-binding positions include Asp-73 and 134-141; that span reads TGNPFFTT. ATP-binding residues include Thr-161, Tyr-167, and Asp-170.

Belongs to the UMP kinase family. Homohexamer.

It is found in the cytoplasm. The enzyme catalyses UMP + ATP = UDP + ADP. It participates in pyrimidine metabolism; CTP biosynthesis via de novo pathway; UDP from UMP (UMPK route): step 1/1. Inhibited by UTP. Its function is as follows. Catalyzes the reversible phosphorylation of UMP to UDP. The sequence is that of Uridylate kinase from Paraburkholderia xenovorans (strain LB400).